We begin with the raw amino-acid sequence, 593 residues long: Putative auxin response factor 15 (593 aa).

Residues 126-228 (FTKVLTASDI…ELRVGIRRAR (103 aa)) constitute a DNA-binding region (TF-B3). Residues 511 to 592 (RTCTKVQMQG…MVKRIYIQKR (82 aa)) form the PB1 domain.

Belongs to the ARF family. As to quaternary structure, homodimers and heterodimers.

Its subcellular location is the nucleus. Auxin response factors (ARFs) are transcriptional factors that bind specifically to the DNA sequence 5'-TGTCTC-3' found in the auxin-responsive promoter elements (AuxREs). Could act as transcriptional activator or repressor. Formation of heterodimers with Aux/IAA proteins may alter their ability to modulate early auxin response genes expression. The sequence is that of Putative auxin response factor 15 (ARF15) from Arabidopsis thaliana (Mouse-ear cress).